The sequence spans 348 residues: Dihydroorotase (348 aa).

Zn(2+) contacts are provided by His-17 and His-19. Substrate is bound by residues 19–21 (HLR) and Asn-45. The Zn(2+) site is built by Lys-103, His-140, and His-178. Position 103 is an N6-carboxylysine (Lys-103). Residue His-140 coordinates substrate. Residue Leu-223 coordinates substrate. Asp-251 lines the Zn(2+) pocket. The active site involves Asp-251. Substrate is bound by residues His-255 and Ala-267.

Belongs to the metallo-dependent hydrolases superfamily. DHOase family. Class II DHOase subfamily. As to quaternary structure, homodimer. Zn(2+) serves as cofactor.

The enzyme catalyses (S)-dihydroorotate + H2O = N-carbamoyl-L-aspartate + H(+). It functions in the pathway pyrimidine metabolism; UMP biosynthesis via de novo pathway; (S)-dihydroorotate from bicarbonate: step 3/3. In terms of biological role, catalyzes the reversible cyclization of carbamoyl aspartate to dihydroorotate. In Cronobacter sakazakii (strain ATCC BAA-894) (Enterobacter sakazakii), this protein is Dihydroorotase.